We begin with the raw amino-acid sequence, 174 residues long: Eukaryotic translation elongation factor 1 epsilon-1 (174 aa).

Ala-2 bears the N-acetylalanine mark. An N-terminal region spans residues Ala-2–Asn-56. In terms of domain architecture, GST C-terminal spans His-50–Ser-173. The linker stretch occupies residues Lys-57–Ser-63. Positions Thr-64–Tyr-152 are C-terminal. At Lys-138 the chain carries N6-acetyllysine. Residues Pro-153–Leu-169 adopt a coiled-coil conformation.

As to quaternary structure, part of a multisubunit complex that groups tRNA ligases for Arg (RARS1), Asp (DARS1), Gln (QARS1), Ile (IARS1), Leu (LARS1), Lys (KARS1), Met (MARS1) the bifunctional ligase for Glu and Pro (EPRS1) and the auxiliary subunits AIMP1/p43, AIMP2/p38 and EEF1E1/p18. Can interact simultaneously with MARS1 and EPRS1. Forms a linear complex that contains MARS1, EEF1E1, EPRS1 and AIMP2 that is at the core of the multisubunit complex. Interacts with ATM and ATR. The interaction with ATM, which takes place independently of TP53, is induced by DNA damage that may occur during genotoxic stress or cell growth. The interaction with ATR is enhanced by UV irradiation. As to expression, down-regulated in various cancer tissues.

It is found in the cytoplasm. The protein resides in the cytosol. The protein localises to the nucleus. Positive modulator of ATM response to DNA damage. The sequence is that of Eukaryotic translation elongation factor 1 epsilon-1 (EEF1E1) from Homo sapiens (Human).